A 257-amino-acid chain; its full sequence is Imidazole glycerol phosphate synthase subunit HisF (257 aa).

Active-site residues include Asp-12 and Asp-131.

It belongs to the HisA/HisF family. In terms of assembly, heterodimer of HisH and HisF.

It is found in the cytoplasm. The enzyme catalyses 5-[(5-phospho-1-deoxy-D-ribulos-1-ylimino)methylamino]-1-(5-phospho-beta-D-ribosyl)imidazole-4-carboxamide + L-glutamine = D-erythro-1-(imidazol-4-yl)glycerol 3-phosphate + 5-amino-1-(5-phospho-beta-D-ribosyl)imidazole-4-carboxamide + L-glutamate + H(+). It participates in amino-acid biosynthesis; L-histidine biosynthesis; L-histidine from 5-phospho-alpha-D-ribose 1-diphosphate: step 5/9. Functionally, IGPS catalyzes the conversion of PRFAR and glutamine to IGP, AICAR and glutamate. The HisF subunit catalyzes the cyclization activity that produces IGP and AICAR from PRFAR using the ammonia provided by the HisH subunit. In Cellvibrio japonicus (strain Ueda107) (Pseudomonas fluorescens subsp. cellulosa), this protein is Imidazole glycerol phosphate synthase subunit HisF.